The chain runs to 295 residues: CCAAT-binding factor complex subunit php4 (295 aa).

The segment covering 1-19 has biased composition (low complexity); that stretch reads MESSKSPSEVEKSSSASPA. The tract at residues 1 to 69 is disordered; it reads MESSKSPSEV…GPTSALSVEE (69 aa). The stretch at 73 to 111 forms a coiled coil; the sequence is RVREKQYQDTIGKLQKENNELLEQLEMLQAQLKNSTLDS. Residues 93–100 carry the Nuclear export signal motif; sequence LLEQLEML. Residues 108-130 are disordered; that stretch reads TLDSPKEVEVNSEVVKPDSATTE.

In terms of assembly, component of tha CCAAT-binding complex composed of at least php2, php3, php4 and php5. Interacts with crm1 and grx4.

It localises to the cytoplasm. It is found in the nucleus. The protein localises to the cytoskeleton. The protein resides in the spindle pole. Component of the transcription regulatory CCAAT-binding complex. Required for the reprogramming of the cell for iron use. Down-regulates pcl1, sdh4, and isa1 underlow-iron conditions. This Schizosaccharomyces pombe (strain 972 / ATCC 24843) (Fission yeast) protein is CCAAT-binding factor complex subunit php4 (php4).